The sequence spans 4015 residues: Hybrid PKS-NRPS synthetase iccA (4015 aa).

The segment covering 1-12 has biased composition (polar residues); sequence MAANDSNNQTKP. Residues 1–20 form a disordered region; it reads MAANDSNNQTKPQLPEEPVA. The region spanning 16 to 445 is the Ketosynthase family 3 (KS3) domain; sequence EEPVAIVGSS…GTNAHVIIES (430 aa). Active-site for beta-ketoacyl synthase activity residues include Cys190, His327, and His365. Residues 560–885 form a malonyl-CoA:ACP transacylase (MAT) domain region; the sequence is VFTGQGAQWP…LKRGASDVEA (326 aa). The tract at residues 954–1091 is N-terminal hotdog fold; the sequence is HELLGRRTPD…GRLSVHLGEA (138 aa). The interval 954 to 1260 is dehydratase (DH) domain; the sequence is HELLGRRTPD…TTKMVGEQDA (307 aa). Residues 954-1261 enclose the PKS/mFAS DH domain; it reads HELLGRRTPD…TKMVGEQDAS (308 aa). His986 acts as the Proton acceptor; for dehydratase activity in catalysis. A C-terminal hotdog fold region spans residues 1106–1261; sequence LVNINTDRAY…TKMVGEQDAS (156 aa). Asp1165 functions as the Proton donor; for dehydratase activity in the catalytic mechanism. Residues 1400 to 1598 form a methyltransferase (MT) domain region; it reads KDDMLNRFYM…YSGADMVVHD (199 aa). A ketoreductase (KR) domain region spans residues 2120–2261; it reads KTYLMVGAAG…STATTIGNIG (142 aa). The segment at 2379-2405 is disordered; sequence STLQNDSSQTGGTGNGSSVRRQVEEAQ. Residues 2409–2488 form the Carrier 1 domain; it reads EAVDAVLDGF…QICTTAAKKV (80 aa). Ser2448 carries the post-translational modification O-(pantetheine 4'-phosphoryl)serine. Basic and acidic residues predominate over residues 2498 to 2515; the sequence is EDAVAEEGGREAASKKEP. Disordered regions lie at residues 2498–2529 and 2545–2597; these read EDAVAEEGGREAASKKEPAPAASAPTPAPVAP and TISE…VRDE. Residues 2553–2569 show a composition bias toward low complexity; it reads SAFSNKGSSSSATGASS. Basic and acidic residues predominate over residues 2582-2597; that stretch reads TSKDQSHVRPETVRDE. The condensation (C) domain stretch occupies residues 2598-3029; sequence RMSPAQARIW…HVKLKDCVIH (432 aa). The tract at residues 3063–3459 is adenylation (A) (KR) domain; that stretch reads LKSPKNAAIQ…GTLLCLGRLD (397 aa). The interval 3063 to 3459 is reductase (RED) domain; the sequence is LKSPKNAAIQ…GTLLCLGRLD (397 aa). The region spanning 3572–3651 is the Carrier 2 domain; that stretch reads EKMNIREGEL…EMALCVDEQR (80 aa). Ser3611 bears the O-(pantetheine 4'-phosphoryl)serine mark.

The protein in the C-terminal section; belongs to the NRP synthetase family.

It catalyses the reaction L-tyrosine + holo-[ACP] + 7 malonyl-CoA + acetyl-CoA + 8 AH2 + 2 S-adenosyl-L-methionine + ATP + 4 H(+) = N-[(4E,6E,10S,12Z,14E)-6,10-dimethyl-3-oxohexadeca-4,6,12,14-tetraenoyl]-L-tyrosyl-[ACP] + 8 A + AMP + 2 S-adenosyl-L-homocysteine + 7 CO2 + diphosphate + 8 CoA + 6 H2O. Its pathway is mycotoxin biosynthesis. Its function is as follows. Hybrid PKS-NRPS synthetase; part of the gene cluster that mediates the biosynthesis of ilicicolin H, a 4-hydroxy-2-pyridonealkaloid that has potent and broad antifungal activities by inhibiting the mitochondrial respiration chain. IccA assembles the backbone of ilicicolin H. The PKS portion and trans-acting enoyl reductase iccB work together to construct an octaketide, and two methyl groups are introduced by the MT domain during the chain assembly. The nascent chain is then condensed with tyrosine, catalyzed by the C domain, and the resulting PKS-NRPS hybrid is offloaded by the RED domain to form an advanced tetramic acid intermediate. The biosynthesis of ilicicolin H starts with formation of the tetramic acid by the hybrid PKS-NRPS synthetase iccA with the partnering trans-enoyl reductase iccB since iccA lacks a designated enoylreductase (ER) domain. The cytochrome P450 monooxygenase iccC then catalyzes the ring expansion of the tetramate to the acyclic 2-pyridone. The pericyclase iccD further converts the acyclic 2-pyridone into 8-epi-ilicicolin H. Finally, the epimerase iccE converts 8-epi-ilicicolin H into ilicicolin H via epimerization. IccA to iccE are sufficient for ilicicolin H biosynthesis and the roles of the remaining enzymes, iccF, iccG and iccH within the pathway have still to be determined. The polypeptide is Hybrid PKS-NRPS synthetase iccA (Talaromyces variabilis (Penicillium variabile)).